The following is a 34-amino-acid chain: uncharacterized protein (34 aa).

Residues 10 to 30 (LIITSSFFAIAAVLVLSVLLI) traverse the membrane as a helical segment.

The protein resides in the membrane. This is an uncharacterized protein from Escherichia coli O6:H1 (strain CFT073 / ATCC 700928 / UPEC).